A 540-amino-acid polypeptide reads, in one-letter code: Chaperonin GroEL (540 aa).

Residues 30–33 (TLGP), 87–91 (DGTTT), Gly-414, 479–481 (NAL), and Asp-495 each bind ATP.

This sequence belongs to the chaperonin (HSP60) family. Forms a cylinder of 14 subunits composed of two heptameric rings stacked back-to-back. Interacts with the co-chaperonin GroES.

Its subcellular location is the cytoplasm. The catalysed reaction is ATP + H2O + a folded polypeptide = ADP + phosphate + an unfolded polypeptide.. Together with its co-chaperonin GroES, plays an essential role in assisting protein folding. The GroEL-GroES system forms a nano-cage that allows encapsulation of the non-native substrate proteins and provides a physical environment optimized to promote and accelerate protein folding. In Carboxydothermus hydrogenoformans (strain ATCC BAA-161 / DSM 6008 / Z-2901), this protein is Chaperonin GroEL.